The primary structure comprises 543 residues: Serendipity locus protein alpha (543 aa).

It is found in the cytoplasm. The protein localises to the cell membrane. Required for the cellularization of the syncytial blastoderm embryo. Involved in the localization of the actin filaments just prior to and during plasma membrane invagination. Sry-alpha together with nullo and bnk may provide auxiliary functions, by acting both to stabilize a large and dynamic microfilament structure and regulate its functions. The sequence is that of Serendipity locus protein alpha (Sry-alpha) from Drosophila subobscura (Fruit fly).